Consider the following 211-residue polypeptide: Glutathione S-transferase class-mu 28 kDa isozyme (211 aa).

At Ala2 the chain carries N-acetylalanine. In terms of domain architecture, GST N-terminal spans 4-86; that stretch reads EHIKVIYFDG…YMAKKHHMMG (83 aa). Glutathione contacts are provided by residues Tyr10, 10 to 11, Arg16, 41 to 45, Leu53, 55 to 56, and 70 to 71; these read YF, WPKIK, AV, and ES. The 124-residue stretch at 88–211 folds into the GST C-terminal domain; the sequence is TDEEYYSVEK…YLSNRPATPF (124 aa).

This sequence belongs to the GST superfamily. Mu family. In terms of assembly, homodimer. As to expression, in the adult, expressed in excretory epithelial cells but absent from the caecal epithelium and flame cells. Also expressed in the tegument and its extensions into the parenchyma. In the schistosomulum, expressed in the tegument and associated structures. Not expressed in digestive tract, reproductive organs or muscles (at protein level).

It carries out the reaction RX + glutathione = an S-substituted glutathione + a halide anion + H(+). Conjugation of reduced glutathione to a wide number of exogenous and endogenous hydrophobic electrophiles. Its function is as follows. GST isoenzymes appear to play a central role in the parasite detoxification system. Other functions are also suspected including a role in increasing the solubility of haematin in the parasite gut. This is Glutathione S-transferase class-mu 28 kDa isozyme (GST28) from Schistosoma mansoni (Blood fluke).